Here is a 1157-residue protein sequence, read N- to C-terminus: Endo-1,4-beta-xylanase A (1157 aa).

The N-terminal stretch at 1 to 33 is a signal peptide; it reads MMKNNVDRIVSIVTALIMIFGASLFSPPIRVFA. CBM-cenC domains are found at residues 38–189 and 195–343; these read INLV…VTTQ and GNVI…VIGE. The 324-residue stretch at 352-675 folds into the GH10 domain; it reads QNDIPDLYSV…KPAFWAVVDP (324 aa). Residue glutamate 495 is the Proton donor of the active site. Residue aspartate 537 is part of the active site. The Nucleophile role is filled by glutamate 600. SLH domains follow at residues 1051 to 1114 and 1115 to 1157; these read KKGV…YSGE and FSDV…EMTQ.

The protein belongs to the glycosyl hydrolase 10 (cellulase F) family.

The enzyme catalyses Endohydrolysis of (1-&gt;4)-beta-D-xylosidic linkages in xylans.. It functions in the pathway glycan degradation; xylan degradation. In terms of biological role, endo-acting enzyme that randomly cleaves the internal xylosidic linkages of the xylan backbone, yielding xylooligosaccharides of various lengths which are further hydrolyzed to xylose molecules by beta-xylosidase (EC 3.2.1.37). Requires at least three xylose residues for catalytic activity. Does not have activity against xylobiose. This chain is Endo-1,4-beta-xylanase A (xynA), found in Thermoanaerobacterium saccharolyticum.